A 40-amino-acid polypeptide reads, in one-letter code: Thioredoxin (40 aa).

Cysteines 29 and 32 form a disulfide.

It belongs to the thioredoxin family.

Functionally, participates in various redox reactions through the reversible oxidation of its active center dithiol to a disulfide and catalyzes dithiol-disulfide exchange reactions. This is Thioredoxin (trxA) from Clostridium sporogenes.